Here is an 82-residue protein sequence, read N- to C-terminus: MSDVGEIAADRLKSFVERIERLEEEKSGLQEDIKEVYSEAKGTGFDVKIIRQIIRLRKMDKADRQEQRAILEMYEEALGMTE.

This sequence belongs to the UPF0335 family.

This Azospirillum brasilense protein is UPF0335 protein pRhico085.